A 91-amino-acid chain; its full sequence is Small ribosomal subunit protein uS19 (91 aa).

Belongs to the universal ribosomal protein uS19 family.

In terms of biological role, protein S19 forms a complex with S13 that binds strongly to the 16S ribosomal RNA. The chain is Small ribosomal subunit protein uS19 from Synechococcus sp. (strain WH7803).